The following is a 1295-amino-acid chain: Phosphoribosylformylglycinamidine synthase (1295 aa).

The interval 302-327 (SPWPGASTGSGGEIRDEGATGRGAKP) is disordered. ATP-binding positions include 306–317 (GASTGSGGEIRD) and Ala677. Asp678, Glu717, Asn721, and Asp884 together coordinate Mg(2+). Ser886 serves as a coordination point for ATP. One can recognise a Glutamine amidotransferase type-1 domain in the interval 1042 to 1295 (VAVLREQGVN…IFRNARKQLG (254 aa)). The Nucleophile role is filled by Cys1135. Active-site residues include His1260 and Glu1262.

This sequence in the N-terminal section; belongs to the FGAMS family. Monomer.

The protein resides in the cytoplasm. The catalysed reaction is N(2)-formyl-N(1)-(5-phospho-beta-D-ribosyl)glycinamide + L-glutamine + ATP + H2O = 2-formamido-N(1)-(5-O-phospho-beta-D-ribosyl)acetamidine + L-glutamate + ADP + phosphate + H(+). It functions in the pathway purine metabolism; IMP biosynthesis via de novo pathway; 5-amino-1-(5-phospho-D-ribosyl)imidazole from N(2)-formyl-N(1)-(5-phospho-D-ribosyl)glycinamide: step 1/2. In terms of biological role, phosphoribosylformylglycinamidine synthase involved in the purines biosynthetic pathway. Catalyzes the ATP-dependent conversion of formylglycinamide ribonucleotide (FGAR) and glutamine to yield formylglycinamidine ribonucleotide (FGAM) and glutamate. This is Phosphoribosylformylglycinamidine synthase from Photorhabdus laumondii subsp. laumondii (strain DSM 15139 / CIP 105565 / TT01) (Photorhabdus luminescens subsp. laumondii).